The chain runs to 157 residues: Cuticle protein 19 (157 aa).

6 repeat units span residues 11-14 (AAPA), 18-21 (AAPA), 24-27 (AAPA), 29-32 (AAPA), 39-42 (AAPA), and 47-50 (AAPA). The Chitin-binding type R&amp;R domain maps to 56 to 127 (YPKYAFEYGV…SGPSAHPAPA (72 aa)). Copy 7 of the repeat occupies 141 to 144 (AAPA).

Functionally, component of the cuticle of migratory locust which contains more than 100 different structural proteins. The protein is Cuticle protein 19 of Locusta migratoria (Migratory locust).